Here is a 126-residue protein sequence, read N- to C-terminus: Small ribosomal subunit protein uS13 (126 aa).

Residues 96-126 (LPVRGQQTKTNARTRKGRRKGTVANKKKVSK) form a disordered region. The span at 107-126 (ARTRKGRRKGTVANKKKVSK) shows a compositional bias: basic residues.

The protein belongs to the universal ribosomal protein uS13 family. In terms of assembly, part of the 30S ribosomal subunit. Forms a loose heterodimer with protein S19. Forms two bridges to the 50S subunit in the 70S ribosome.

Functionally, located at the top of the head of the 30S subunit, it contacts several helices of the 16S rRNA. In the 70S ribosome it contacts the 23S rRNA (bridge B1a) and protein L5 of the 50S subunit (bridge B1b), connecting the 2 subunits; these bridges are implicated in subunit movement. Contacts the tRNAs in the A and P-sites. The chain is Small ribosomal subunit protein uS13 from Hydrogenobaculum sp. (strain Y04AAS1).